A 315-amino-acid polypeptide reads, in one-letter code: Phage tubulin-like protein (315 aa).

GTP contacts are provided by residues 12 to 13 (GT), 93 to 95 (GSG), and Asn165.

Belongs to the FtsZ family. PhuZ subfamily. As to quaternary structure, homomultimer. Polymerizes in a strictly GTP-dependent manner.

The protein localises to the host cytoplasm. The catalysed reaction is GTP + H2O = GDP + phosphate + H(+). Its activity is regulated as follows. The non-hydrolyzable GTP analog GMPCPP stabilizes filaments, which never disassemble. Its function is as follows. A tubulin-like GTPase that forms filaments, which are required for positioning viral DNA and capsids in the middle of the host cell for optimal replication. The motor component of a partition system which pushes phage DNA (encased by protein gp105) to the center of the bacterial host cell. Also required for movement of phage capsids to the vicinity of the viral DNA and rotation of the encased viral DNA at midcell. Forms filaments during the lytic phase, which position phage DNA at the center of the bacterial host cell. Filaments have a three-stranded intertwined achitecture and form a spindle-like cytoskeleton within the infected cell. Has GTPase activity. Filaments grow at the plus end and depolymerize at the minus end, a process called treadmilling, and switch from growing in a polar manner to catastrophic depolymerization, i.e. they display dynamic instability, like tubulin. In infected host cells the filament ends close to the cell pole are relatively stable, while the other end near the phage DNA is highly dynamic. Both capsid movement and DNA rotation probably require treadmilling. The protein is Phage tubulin-like protein of Pseudomonas phage 201phi2-1 (Pseudomonas chlororaphis phage 201phi2-1).